A 499-amino-acid chain; its full sequence is Thermostable carboxypeptidase 1 (499 aa).

Positions 6–499 (QNETIKQILA…FVRWVKEKYL (494 aa)) constitute a Peptidase M32 domain. Residues 238–240 (HPF) carry the HPF motif. The DXRXT signature appears at 248–252 (DVRIT). His269 is a binding site for Co(2+). An HEXXH motif is present at residues 269–273 (HEFGH). Glu270 (proton donor/acceptor) is an active-site residue. Residues His273 and Glu299 each contribute to the Co(2+) site. The short motif at 298 to 301 (HESQ) is the HES/GQ element. Residues 350–355 (IRTEAD) carry the I/NRXXA/SD motif. Residues 405-412 (GILQDIHW) carry the GXXQDXHW motif.

The protein belongs to the peptidase M32 family. In terms of assembly, homodimer. Requires Co(2+) as cofactor. It depends on Mn(2+) as a cofactor.

The catalysed reaction is Release of a C-terminal amino acid with broad specificity, except for -Pro.. With respect to regulation, EDTA and DTT reversibly abolish carboxypeptidase activity. Its function is as follows. Broad specificity carboxypetidase that releases amino acids sequentially from the C-terminus, including neutral, aromatic, polar and basic residues, but not Pro, Gly, Asp and Glu. The chain is Thermostable carboxypeptidase 1 from Pyrococcus furiosus (strain ATCC 43587 / DSM 3638 / JCM 8422 / Vc1).